Consider the following 1193-residue polypeptide: Laminin subunit gamma-2 (1193 aa).

An N-terminal signal peptide occupies residues 1–21 (MPALWLGCCLCFSLLLPAARA). 12 cysteine pairs are disulfide-bonded: cysteine 28–cysteine 37, cysteine 30–cysteine 53, cysteine 56–cysteine 65, cysteine 68–cysteine 81, cysteine 84–cysteine 96, cysteine 86–cysteine 102, cysteine 104–cysteine 113, cysteine 116–cysteine 128, cysteine 139–cysteine 150, cysteine 141–cysteine 155, cysteine 157–cysteine 166, and cysteine 169–cysteine 184. Laminin EGF-like domains are found at residues 28–83 (CDCN…RCLP), 84–130 (CNCN…GCTQ), and 139–186 (CDCD…GCTQ). In terms of domain architecture, Laminin EGF-like 4; first part spans 187–196 (CFCYGHSASC). Residues 213–381 (QDVDGWKAVQ…SGAPAPWVEQ (169 aa)) form the Laminin IV type A domain. N-linked (GlcNAc...) asparagine glycosylation is found at asparagine 342 and asparagine 362. A Laminin EGF-like 4; second part domain is found at 382–415 (CICPVGYKGQFCQDCASGYKRDSARLGPFGTCIP). 3 consecutive Laminin EGF-like domains span residues 416–461 (CNCQ…SCKP), 462–516 (CPCH…PCQP), and 517–572 (CQCN…KCRA). 11 disulfide bridges follow: cysteine 462-cysteine 470, cysteine 464-cysteine 481, cysteine 484-cysteine 493, cysteine 496-cysteine 514, cysteine 517-cysteine 531, cysteine 519-cysteine 538, cysteine 541-cysteine 550, cysteine 553-cysteine 570, cysteine 573-cysteine 585, cysteine 575-cysteine 591, and cysteine 593-cysteine 602. The Laminin EGF-like 8; truncated domain maps to 573–602 (CNCNPMGSEPVGCRSDGTCVCKPGFGGPNC). The domain II and I stretch occupies residues 603–1193 (EHGAFSCPAC…CYNTQALEQQ (591 aa)). A coiled-coil region spans residues 611-718 (ACYNQVKIQM…GSQYQNRVRD (108 aa)). 2 O-linked (Xyl...) (chondroitin sulfate) serine glycosylation sites follow: serine 803 and serine 805. Coiled-coil stretches lie at residues 811-1076 (AVVQ…AVQM) and 1117-1193 (EEGL…LEQQ). N-linked (GlcNAc...) asparagine glycans are attached at residues asparagine 942 and asparagine 1033.

As to quaternary structure, laminin is a complex glycoprotein, consisting of three different polypeptide chains (alpha, beta, gamma), which are bound to each other by disulfide bonds into a cross-shaped molecule comprising one long and three short arms with globules at each end. Gamma-2 is a subunit of laminin-5 (laminin-332 or epiligrin/kalinin/nicein). O-glycosylated; contains chondroitin sulfate (CS). CS attachment is on either Ser-803 or Ser-805. The large variant is expressed only in specific epithelial cells of embryonic and neonatal tissues. In 17-week old embryo the small variant is found in cerebral cortex, lung, and distal tubes of kidney, but not in epithelia except for distal tubuli.

The protein localises to the secreted. It is found in the extracellular space. It localises to the extracellular matrix. Its subcellular location is the basement membrane. Binding to cells via a high affinity receptor, laminin is thought to mediate the attachment, migration and organization of cells into tissues during embryonic development by interacting with other extracellular matrix components. Ladsin exerts cell-scattering activity toward a wide variety of cells, including epithelial, endothelial, and fibroblastic cells. In Homo sapiens (Human), this protein is Laminin subunit gamma-2 (LAMC2).